A 428-amino-acid chain; its full sequence is Dihydroorotase (428 aa).

Positions 56 and 58 each coordinate Zn(2+). Substrate is bound by residues 58-60 (HLR) and asparagine 90. Positions 150, 177, and 230 each coordinate Zn(2+). Asparagine 276 contacts substrate. Zn(2+) is bound at residue aspartate 303. The active site involves aspartate 303. Residue histidine 307 coordinates substrate.

Belongs to the metallo-dependent hydrolases superfamily. DHOase family. Class I DHOase subfamily. Zn(2+) serves as cofactor.

It catalyses the reaction (S)-dihydroorotate + H2O = N-carbamoyl-L-aspartate + H(+). The protein operates within pyrimidine metabolism; UMP biosynthesis via de novo pathway; (S)-dihydroorotate from bicarbonate: step 3/3. Catalyzes the reversible cyclization of carbamoyl aspartate to dihydroorotate. In Streptomyces coelicolor (strain ATCC BAA-471 / A3(2) / M145), this protein is Dihydroorotase.